The primary structure comprises 247 residues: Ribonuclease PH (247 aa).

Residues Arg87 and 125–127 (GTR) each bind phosphate.

This sequence belongs to the RNase PH family. In terms of assembly, homohexameric ring arranged as a trimer of dimers.

It catalyses the reaction tRNA(n+1) + phosphate = tRNA(n) + a ribonucleoside 5'-diphosphate. Phosphorolytic 3'-5' exoribonuclease that plays an important role in tRNA 3'-end maturation. Removes nucleotide residues following the 3'-CCA terminus of tRNAs; can also add nucleotides to the ends of RNA molecules by using nucleoside diphosphates as substrates, but this may not be physiologically important. Probably plays a role in initiation of 16S rRNA degradation (leading to ribosome degradation) during starvation. The chain is Ribonuclease PH from Nostoc sp. (strain PCC 7120 / SAG 25.82 / UTEX 2576).